The following is a 271-amino-acid chain: 3-methyl-2-oxobutanoate hydroxymethyltransferase (271 aa).

Asp-53 and Asp-92 together coordinate Mg(2+). 3-methyl-2-oxobutanoate-binding positions include 53 to 54 (DS), Asp-92, and Lys-120. A Mg(2+)-binding site is contributed by Glu-122. Glu-189 functions as the Proton acceptor in the catalytic mechanism.

This sequence belongs to the PanB family. As to quaternary structure, homodecamer; pentamer of dimers. Mg(2+) is required as a cofactor.

The protein resides in the cytoplasm. The catalysed reaction is 3-methyl-2-oxobutanoate + (6R)-5,10-methylene-5,6,7,8-tetrahydrofolate + H2O = 2-dehydropantoate + (6S)-5,6,7,8-tetrahydrofolate. The protein operates within cofactor biosynthesis; (R)-pantothenate biosynthesis; (R)-pantoate from 3-methyl-2-oxobutanoate: step 1/2. Its function is as follows. Catalyzes the reversible reaction in which hydroxymethyl group from 5,10-methylenetetrahydrofolate is transferred onto alpha-ketoisovalerate to form ketopantoate. In Paraburkholderia phytofirmans (strain DSM 17436 / LMG 22146 / PsJN) (Burkholderia phytofirmans), this protein is 3-methyl-2-oxobutanoate hydroxymethyltransferase.